Reading from the N-terminus, the 354-residue chain is UDP-N-acetylglucosamine--N-acetylmuramyl-(pentapeptide) pyrophosphoryl-undecaprenol N-acetylglucosamine transferase (354 aa).

The UDP-N-acetyl-alpha-D-glucosamine site is built by S196 and Q288.

This sequence belongs to the glycosyltransferase 28 family. MurG subfamily.

The protein localises to the cell membrane. The enzyme catalyses Mur2Ac(oyl-L-Ala-gamma-D-Glu-L-Lys-D-Ala-D-Ala)-di-trans,octa-cis-undecaprenyl diphosphate + UDP-N-acetyl-alpha-D-glucosamine = beta-D-GlcNAc-(1-&gt;4)-Mur2Ac(oyl-L-Ala-gamma-D-Glu-L-Lys-D-Ala-D-Ala)-di-trans,octa-cis-undecaprenyl diphosphate + UDP + H(+). It functions in the pathway cell wall biogenesis; peptidoglycan biosynthesis. In terms of biological role, cell wall formation. Catalyzes the transfer of a GlcNAc subunit on undecaprenyl-pyrophosphoryl-MurNAc-pentapeptide (lipid intermediate I) to form undecaprenyl-pyrophosphoryl-MurNAc-(pentapeptide)GlcNAc (lipid intermediate II). The chain is UDP-N-acetylglucosamine--N-acetylmuramyl-(pentapeptide) pyrophosphoryl-undecaprenol N-acetylglucosamine transferase from Streptococcus suis (strain 98HAH33).